Here is a 115-residue protein sequence, read N- to C-terminus: MSPIFTCITILCLLAAGSPGEEVAQTPKHLVRGEGQKAKLYCAPIKGHSYVFWYQQVLKNEFKFLISFQNENVFDETGMPKERFSAKCLPNSPCSLEIQATKLEDSAVYFCASSQ.

The first 20 residues, 1–20 (MSPIFTCITILCLLAAGSPG), serve as a signal peptide directing secretion. The 95-residue stretch at 21–115 (EEVAQTPKHL…SAVYFCASSQ (95 aa)) folds into the Ig-like domain. A disulfide bridge connects residues Cys-42 and Cys-111.

As to quaternary structure, alpha-beta TR is a heterodimer composed of an alpha and beta chain; disulfide-linked. The alpha-beta TR is associated with the transmembrane signaling CD3 coreceptor proteins to form the TR-CD3 (TcR or TCR). The assembly of alpha-beta TR heterodimers with CD3 occurs in the endoplasmic reticulum where a single alpha-beta TR heterodimer associates with one CD3D-CD3E heterodimer, one CD3G-CD3E heterodimer and one CD247 homodimer forming a stable octameric structure. CD3D-CD3E and CD3G-CD3E heterodimers preferentially associate with TR alpha and TR beta chains, respectively. The association of the CD247 homodimer is the last step of TcR assembly in the endoplasmic reticulum and is required for transport to the cell surface.

It localises to the cell membrane. In terms of biological role, v region of the variable domain of T cell receptor (TR) beta chain that participates in the antigen recognition. Alpha-beta T cell receptors are antigen specific receptors which are essential to the immune response and are present on the cell surface of T lymphocytes. Recognize peptide-major histocompatibility (MH) (pMH) complexes that are displayed by antigen presenting cells (APC), a prerequisite for efficient T cell adaptive immunity against pathogens. Binding of alpha-beta TR to pMH complex initiates TR-CD3 clustering on the cell surface and intracellular activation of LCK that phosphorylates the ITAM motifs of CD3G, CD3D, CD3E and CD247 enabling the recruitment of ZAP70. In turn ZAP70 phosphorylates LAT, which recruits numerous signaling molecules to form the LAT signalosome. The LAT signalosome propagates signal branching to three major signaling pathways, the calcium, the mitogen-activated protein kinase (MAPK) kinase and the nuclear factor NF-kappa-B (NF-kB) pathways, leading to the mobilization of transcription factors that are critical for gene expression and essential for T cell growth and differentiation. The T cell repertoire is generated in the thymus, by V-(D)-J rearrangement. This repertoire is then shaped by intrathymic selection events to generate a peripheral T cell pool of self-MH restricted, non-autoaggressive T cells. Post-thymic interaction of alpha-beta TR with the pMH complexes shapes TR structural and functional avidity. The polypeptide is T cell receptor beta variable 16 (Homo sapiens (Human)).